The primary structure comprises 381 residues: Heme A synthase (381 aa).

Residues 1 to 28 (MSNRTIFEEVSSDSKQQSSPTPGGIDRK) form a disordered region. A run of 8 helical transmembrane segments spans residues 36–56 (IRVWLAVLFALVVAMIAVGGL), 125–145 (VIGLIWALGFFGFLVTRSIPT), 151–171 (LLLPGILGGVQGAIGWWMVAS), 187–207 (LATHLGLAFVILGFLAWYMFL), 230–250 (STGLLHFAFLQILLGALVAGI), 287–307 (LVQFIHRVAGYLLFAFAVVVW), 320–340 (FAFNAVFAALSLQLVIGIVTV), and 344–364 (APVEIAIVHQAVAVLVWVLIL). Histidine 292 contributes to the heme binding site. Heme is bound at residue histidine 352.

This sequence belongs to the COX15/CtaA family. Type 2 subfamily. Interacts with CtaB. It depends on heme b as a cofactor.

Its subcellular location is the cell membrane. It carries out the reaction Fe(II)-heme o + 2 A + H2O = Fe(II)-heme a + 2 AH2. The protein operates within porphyrin-containing compound metabolism; heme A biosynthesis; heme A from heme O: step 1/1. Its function is as follows. Catalyzes the conversion of heme O to heme A by two successive hydroxylations of the methyl group at C8. The first hydroxylation forms heme I, the second hydroxylation results in an unstable dihydroxymethyl group, which spontaneously dehydrates, resulting in the formyl group of heme A. The chain is Heme A synthase from Ruegeria sp. (strain TM1040) (Silicibacter sp.).